Here is a 306-residue protein sequence, read N- to C-terminus: Large ribosomal subunit protein bL19m (306 aa).

Residues 34–43 (ENQEEQKKEA) show a composition bias toward basic and acidic residues. Residues 34–53 (ENQEEQKKEAPPTTPTSPVN) form a disordered region.

It belongs to the bacterial ribosomal protein bL19 family. As to quaternary structure, component of the mitochondrial ribosome large subunit (39S) which comprises a 16S rRNA and about 50 distinct proteins.

The protein resides in the mitochondrion. This Drosophila melanogaster (Fruit fly) protein is Large ribosomal subunit protein bL19m (mRpL19).